The primary structure comprises 198 residues: Phycocyanobilin lyase CpcT homolog (198 aa).

Belongs to the CpcT/CpeT biliprotein lyase family.

In terms of biological role, covalently attaches a chromophore to Cys residue(s) of phycobiliproteins. In vitro is not seen to act as a chromophore lyase for ApcA1, ApcA2, ApcB, ApcD, ApcF, CpcB or PecB, the lyase activity is therefore unsure. This is Phycocyanobilin lyase CpcT homolog (cpcT2) from Nostoc sp. (strain PCC 7120 / SAG 25.82 / UTEX 2576).